We begin with the raw amino-acid sequence, 93 residues long: Histone H2B (93 aa).

Residues 1–12 (MPEPAKSAPAPK) are compositionally biased toward low complexity. The segment at 1-31 (MPEPAKSAPAPKKGSKKAVTKTQKKGDKKRX) is disordered. Residues K6 and K13 each carry the N6-acetyllysine modification. Positions 13-28 (KGSKKAVTKTQKKGDK) are enriched in basic residues. S15 is modified (phosphoserine). N6-acetyllysine is present on residues K16 and K21.

This sequence belongs to the histone H2B family. The nucleosome is a histone octamer containing two molecules each of H2A, H2B, H3 and H4 assembled in one H3-H4 heterotetramer and two H2A-H2B heterodimers. The octamer wraps approximately 147 bp of DNA. Post-translationally, monoubiquitination at the C-terminal Lys gives a specific tag for epigenetic transcriptional activation and is also prerequisite for histone H3 'Lys-4' and 'Lys-79' methylation. Phosphorylated on Ser-15 during apoptosis; which facilitates apoptotic chromatin condensation.

It is found in the nucleus. Its subcellular location is the chromosome. Core component of nucleosome. Nucleosomes wrap and compact DNA into chromatin, limiting DNA accessibility to the cellular machineries which require DNA as a template. Histones thereby play a central role in transcription regulation, DNA repair, DNA replication and chromosomal stability. DNA accessibility is regulated via a complex set of post-translational modifications of histones, also called histone code, and nucleosome remodeling. This is Histone H2B from Crocodylus niloticus (Nile crocodile).